The sequence spans 182 residues: MKLIDRRMRLTELLLRCSISVFALLALILVVTDTEVKLIFTIKKTAKYTDMKAVVFLVVANGIAAVYSLLQSVRCVVGTMKGKVLFSKPLAWAFFSGDQAMAYLNVAAIAATAESGVIAREGEEDLQWMRVCTMYGKFCNQMAIGVSSALLASIAMVFVSCISAFSLFRLYGATKDRRTTPW.

Topologically, residues 1 to 12 (MKLIDRRMRLTE) are cytoplasmic. Residues 13–31 (LLLRCSISVFALLALILVV) traverse the membrane as a helical segment. The Extracellular segment spans residues 32–52 (TDTEVKLIFTIKKTAKYTDMK). A helical membrane pass occupies residues 53 to 73 (AVVFLVVANGIAAVYSLLQSV). Residues 74–89 (RCVVGTMKGKVLFSKP) are Cytoplasmic-facing. The chain crosses the membrane as a helical span at residues 90-110 (LAWAFFSGDQAMAYLNVAAIA). The Extracellular segment spans residues 111-141 (ATAESGVIAREGEEDLQWMRVCTMYGKFCNQ). Residues 142–162 (MAIGVSSALLASIAMVFVSCI) traverse the membrane as a helical segment. Residues 163–182 (SAFSLFRLYGATKDRRTTPW) lie on the Cytoplasmic side of the membrane.

Belongs to the Casparian strip membrane proteins (CASP) family. In terms of assembly, homodimer and heterodimers.

Its subcellular location is the cell membrane. This chain is CASP-like protein 2B1, found in Arabidopsis thaliana (Mouse-ear cress).